The sequence spans 453 residues: UDP-glycosyltransferase 79B6 (453 aa).

Residues S266, 325 to 327, 342 to 350, and 364 to 367 each bind UDP-alpha-D-glucose; these read VQQ, HCGFGSMWE, and LGEQ.

Belongs to the UDP-glycosyltransferase family.

This is UDP-glycosyltransferase 79B6 (UGT79B6) from Arabidopsis thaliana (Mouse-ear cress).